Reading from the N-terminus, the 268-residue chain is Glutamine amidotransferase-like class 1 domain-containing protein 3, mitochondrial (268 aa).

The transit peptide at 1-41 (MAAVRVLVASRLAAASAFTSLSPGGRTPSQRAALHLSVPRP) directs the protein to the mitochondrion. 3 positions are modified to N6-acetyllysine: K151, K157, and K164. K203 carries the N6-acetyllysine; alternate modification. K203 is modified (N6-succinyllysine; alternate). K219 is subject to N6-acetyllysine. N6-acetyllysine; alternate is present on residues K223 and K233. K223 and K233 each carry N6-succinyllysine; alternate.

The protein belongs to the GATD3 family.

Its subcellular location is the mitochondrion. The chain is Glutamine amidotransferase-like class 1 domain-containing protein 3, mitochondrial from Homo sapiens (Human).